Reading from the N-terminus, the 201-residue chain is Ependymin-related protein 2 (201 aa).

Positions 1-21 (MILQVVLLLACLSGAIVSTGA) are cleaved as a signal peptide. 2 N-linked (GlcNAc...) asparagine glycosylation sites follow: asparagine 38 and asparagine 137. Positions 199-201 (CRA) match the Microbody targeting signal motif.

The protein belongs to the ependymin family. In terms of tissue distribution, component of the acid-soluble and acid-insoluble organic matrix of calcified shell layers (at protein level).

It is found in the secreted. The polypeptide is Ependymin-related protein 2 (Haliotis asinina (Donkey's ear abalone)).